The sequence spans 378 residues: Erythronate-4-phosphate dehydrogenase (378 aa).

Substrate is bound by residues serine 45 and threonine 66. NAD(+) contacts are provided by aspartate 146 and threonine 175. The active site involves arginine 208. Aspartate 232 contributes to the NAD(+) binding site. The active site involves glutamate 237. Catalysis depends on histidine 254, which acts as the Proton donor. Glycine 257 contacts NAD(+). Tyrosine 258 provides a ligand contact to substrate.

Belongs to the D-isomer specific 2-hydroxyacid dehydrogenase family. PdxB subfamily. As to quaternary structure, homodimer.

It is found in the cytoplasm. It carries out the reaction 4-phospho-D-erythronate + NAD(+) = (R)-3-hydroxy-2-oxo-4-phosphooxybutanoate + NADH + H(+). Its pathway is cofactor biosynthesis; pyridoxine 5'-phosphate biosynthesis; pyridoxine 5'-phosphate from D-erythrose 4-phosphate: step 2/5. Its function is as follows. Catalyzes the oxidation of erythronate-4-phosphate to 3-hydroxy-2-oxo-4-phosphonooxybutanoate. This is Erythronate-4-phosphate dehydrogenase from Salmonella arizonae (strain ATCC BAA-731 / CDC346-86 / RSK2980).